We begin with the raw amino-acid sequence, 142 residues long: Large ribosomal subunit protein uL13 (142 aa).

Belongs to the universal ribosomal protein uL13 family. Part of the 50S ribosomal subunit.

In terms of biological role, this protein is one of the early assembly proteins of the 50S ribosomal subunit, although it is not seen to bind rRNA by itself. It is important during the early stages of 50S assembly. This is Large ribosomal subunit protein uL13 from Syntrophobacter fumaroxidans (strain DSM 10017 / MPOB).